Here is a 282-residue protein sequence, read N- to C-terminus: NFU1 iron-sulfur cluster scaffold homolog, mitochondrial (282 aa).

The N-terminal 27 residues, 1 to 27 (MSKLLSYTARIILRNSRITVRQLVRGF), are a transit peptide targeting the mitochondrion. The nifU stretch occupies residues 178-246 (IKELLDTRIR…IPEVESVEQV (69 aa)). [4Fe-4S] cluster is bound by residues C215 and C218. The disordered stretch occupies residues 263–282 (KNLKQKEPAGAPVGIGGGPN).

It belongs to the NifU family.

It localises to the mitochondrion. Its function is as follows. Molecular scaffold for [Fe-S] cluster assembly of mitochondrial iron-sulfur proteins. The chain is NFU1 iron-sulfur cluster scaffold homolog, mitochondrial from Drosophila persimilis (Fruit fly).